Here is a 411-residue protein sequence, read N- to C-terminus: [Pyruvate dehydrogenase (acetyl-transferring)] kinase isozyme 4, mitochondrial (411 aa).

Residues 138–368 (IIEYKDACTV…DAIIYLKALS (231 aa)) enclose the Histidine kinase domain. Residues 254 to 261 (ELFKNAMR), aspartate 293, 312 to 313 (ST), and 329 to 334 (GFGYGL) each bind ATP.

Belongs to the PDK/BCKDK protein kinase family. As to quaternary structure, homodimer. Interacts with the pyruvate dehydrogenase complex subunit DLAT, and is part of the multimeric pyruvate dehydrogenase complex that contains multiple copies of pyruvate dehydrogenase (E1), dihydrolipoamide acetyltransferase (DLAT, E2) and lipoamide dehydrogenase (DLD, E3). As to expression, ubiquitous; highest levels of expression in heart and skeletal muscle.

It localises to the mitochondrion matrix. It catalyses the reaction L-seryl-[pyruvate dehydrogenase E1 alpha subunit] + ATP = O-phospho-L-seryl-[pyruvate dehydrogenase E1 alpha subunit] + ADP + H(+). Functionally, kinase that plays a key role in regulation of glucose and fatty acid metabolism and homeostasis via phosphorylation of the pyruvate dehydrogenase subunits PDHA1 and PDHA2. This inhibits pyruvate dehydrogenase activity, and thereby regulates metabolite flux through the tricarboxylic acid cycle, down-regulates aerobic respiration and inhibits the formation of acetyl-coenzyme A from pyruvate. Inhibition of pyruvate dehydrogenase decreases glucose utilization and increases fat metabolism in response to prolonged fasting and starvation. Plays an important role in maintaining normal blood glucose levels under starvation, and is involved in the insulin signaling cascade. Via its regulation of pyruvate dehydrogenase activity, plays an important role in maintaining normal blood pH and in preventing the accumulation of ketone bodies under starvation. In the fed state, mediates cellular responses to glucose levels and to a high-fat diet. Regulates both fatty acid oxidation and de novo fatty acid biosynthesis. Plays a role in the generation of reactive oxygen species. Protects detached epithelial cells against anoikis. Plays a role in cell proliferation via its role in regulating carbohydrate and fatty acid metabolism. This chain is [Pyruvate dehydrogenase (acetyl-transferring)] kinase isozyme 4, mitochondrial (PDK4), found in Homo sapiens (Human).